The primary structure comprises 664 residues: Macrolide export ATP-binding/permease protein MacB (664 aa).

The ABC transporter domain occupies 8-246 (LEVHNLVREF…ELNKDPDAAP (239 aa)). An ATP-binding site is contributed by 44–51 (GQSGSGKS). Helical transmembrane passes span 287–307 (FLTMLGIIIGIASVVTVVALG), 543–563 (IAVISLIVGGIGVMNIMLVSV), 587–607 (FLIEAILVCLIGGVLGVLLSL), and 629–649 (SIVAAFVCSTLIGVVFGFLPA).

This sequence belongs to the ABC transporter superfamily. Macrolide exporter (TC 3.A.1.122) family. In terms of assembly, homodimer. Part of the tripartite efflux system MacAB-TolC, which is composed of an inner membrane transporter, MacB, a periplasmic membrane fusion protein, MacA, and an outer membrane component, TolC. The complex forms a large protein conduit and can translocate molecules across both the inner and outer membranes. Interacts with MacA.

It localises to the cell inner membrane. Functionally, part of the tripartite efflux system MacAB-TolC. MacB is a non-canonical ABC transporter that contains transmembrane domains (TMD), which form a pore in the inner membrane, and an ATP-binding domain (NBD), which is responsible for energy generation. Confers resistance against macrolides. The sequence is that of Macrolide export ATP-binding/permease protein MacB from Acinetobacter baylyi (strain ATCC 33305 / BD413 / ADP1).